A 211-amino-acid chain; its full sequence is Pyridoxine/pyridoxamine 5'-phosphate oxidase (211 aa).

Substrate contacts are provided by residues Arg7 to Tyr10 and Lys65. FMN-binding positions include Arg60 to Lys65, Tyr75 to Thr76, Arg81, Lys82, and Gln104. Residues Tyr122, Arg126, and Ser130 each contribute to the substrate site. Residues Gln139–Ser140 and Trp184 contribute to the FMN site. Arg190–His192 provides a ligand contact to substrate. Arg194 contributes to the FMN binding site.

It belongs to the pyridoxamine 5'-phosphate oxidase family. Homodimer. It depends on FMN as a cofactor.

It catalyses the reaction pyridoxamine 5'-phosphate + O2 + H2O = pyridoxal 5'-phosphate + H2O2 + NH4(+). The enzyme catalyses pyridoxine 5'-phosphate + O2 = pyridoxal 5'-phosphate + H2O2. The protein operates within cofactor metabolism; pyridoxal 5'-phosphate salvage; pyridoxal 5'-phosphate from pyridoxamine 5'-phosphate: step 1/1. Its pathway is cofactor metabolism; pyridoxal 5'-phosphate salvage; pyridoxal 5'-phosphate from pyridoxine 5'-phosphate: step 1/1. Catalyzes the oxidation of either pyridoxine 5'-phosphate (PNP) or pyridoxamine 5'-phosphate (PMP) into pyridoxal 5'-phosphate (PLP). This is Pyridoxine/pyridoxamine 5'-phosphate oxidase from Photobacterium profundum (strain SS9).